Reading from the N-terminus, the 311-residue chain is Methionyl-tRNA formyltransferase (311 aa).

Residue serine 110–proline 113 coordinates (6S)-5,6,7,8-tetrahydrofolate.

The protein belongs to the Fmt family.

The catalysed reaction is L-methionyl-tRNA(fMet) + (6R)-10-formyltetrahydrofolate = N-formyl-L-methionyl-tRNA(fMet) + (6S)-5,6,7,8-tetrahydrofolate + H(+). Functionally, attaches a formyl group to the free amino group of methionyl-tRNA(fMet). The formyl group appears to play a dual role in the initiator identity of N-formylmethionyl-tRNA by promoting its recognition by IF2 and preventing the misappropriation of this tRNA by the elongation apparatus. The polypeptide is Methionyl-tRNA formyltransferase (Streptococcus equi subsp. equi (strain 4047)).